We begin with the raw amino-acid sequence, 333 residues long: 6-phosphogluconolactonase (333 aa).

Belongs to the cycloisomerase 2 family.

The enzyme catalyses 6-phospho-D-glucono-1,5-lactone + H2O = 6-phospho-D-gluconate + H(+). The protein operates within carbohydrate degradation; pentose phosphate pathway; D-ribulose 5-phosphate from D-glucose 6-phosphate (oxidative stage): step 2/3. Its function is as follows. Catalyzes the hydrolysis of 6-phosphogluconolactone to 6-phosphogluconate. The protein is 6-phosphogluconolactonase of Yersinia enterocolitica serotype O:8 / biotype 1B (strain NCTC 13174 / 8081).